The following is a 295-amino-acid chain: Shikimate dehydrogenase (NADP(+)) (295 aa).

Shikimate is bound by residues 22–24 (SLS) and Ser-69. The Proton acceptor role is filled by Lys-73. Asn-94 and Asp-111 together coordinate shikimate. NADP(+) contacts are provided by residues 135–139 (GAGGA) and Val-236. Tyr-238 provides a ligand contact to shikimate. Residue Gly-260 coordinates NADP(+).

This sequence belongs to the shikimate dehydrogenase family. Homodimer.

The enzyme catalyses shikimate + NADP(+) = 3-dehydroshikimate + NADPH + H(+). The protein operates within metabolic intermediate biosynthesis; chorismate biosynthesis; chorismate from D-erythrose 4-phosphate and phosphoenolpyruvate: step 4/7. Involved in the biosynthesis of the chorismate, which leads to the biosynthesis of aromatic amino acids. Catalyzes the reversible NADPH linked reduction of 3-dehydroshikimate (DHSA) to yield shikimate (SA). The protein is Shikimate dehydrogenase (NADP(+)) of Streptococcus uberis (strain ATCC BAA-854 / 0140J).